Reading from the N-terminus, the 177-residue chain is Large ribosomal subunit protein uL6 (177 aa).

This sequence belongs to the universal ribosomal protein uL6 family. As to quaternary structure, part of the 50S ribosomal subunit.

In terms of biological role, this protein binds to the 23S rRNA, and is important in its secondary structure. It is located near the subunit interface in the base of the L7/L12 stalk, and near the tRNA binding site of the peptidyltransferase center. The protein is Large ribosomal subunit protein uL6 of Cupriavidus necator (strain ATCC 17699 / DSM 428 / KCTC 22496 / NCIMB 10442 / H16 / Stanier 337) (Ralstonia eutropha).